The sequence spans 42 residues: Fungal defensin eurocin (42 aa).

Residues phenylalanine 2, glycine 3, cysteine 4, and histidine 14 each contribute to the beta-D-GlcNAc-(1-&gt;4)-Mur2Ac(oyl-L-Ala-gamma-D-Glu-L-Lys-D-Ala-D-Ala)-di-trans,octa-cis-undecaprenyl diphosphate site. 3 disulfide bridges follow: cysteine 4–cysteine 27, cysteine 11–cysteine 38, and cysteine 15–cysteine 40. The segment at 31-35 is interaction site with membranes lipids; the sequence is WYLGH. Cysteine 38 contributes to the beta-D-GlcNAc-(1-&gt;4)-Mur2Ac(oyl-L-Ala-gamma-D-Glu-L-Lys-D-Ala-D-Ala)-di-trans,octa-cis-undecaprenyl diphosphate binding site.

The protein belongs to the invertebrate defensin family.

It is found in the secreted. The protein localises to the target cell membrane. Antimicrobial peptide that acts against Gram-positive bacteria but not against Gram-negative bacteria. It selectively inhibits peptidoglycan biosynthesis through complex formation with the cell wall precursor lipid II (1:1 molar ratio) thus inhibiting cell wall synthesis. It does not disrupt cell membranes. In vivo, is effective against an intraperitoneal infection with S.pneumoniae. In vitro, it shows very low hemolytic and cytolytic activities. This chain is Fungal defensin eurocin, found in Aspergillus amstelodami.